Consider the following 365-residue polypeptide: Patr class I histocompatibility antigen, A-108 alpha chain (365 aa).

Positions 1–24 (MAVMPPRTLLLLLSGALALTQTWA) are cleaved as a signal peptide. The tract at residues 25 to 114 (GSHSMRYFYT…LRGYYNQSED (90 aa)) is alpha-1. At 25–308 (GSHSMRYFYT…EPSSQPTIPI (284 aa)) the chain is on the extracellular side. The N-linked (GlcNAc...) asparagine glycan is linked to Asn-110. The segment at 115 to 206 (GSHTIQIMYG…ENGKETLQRT (92 aa)) is alpha-2. 2 disulfides stabilise this stretch: Cys-125-Cys-188 and Cys-227-Cys-283. Positions 207–298 (DPPKTHMTHH…GLPKPLTLRW (92 aa)) are alpha-3. In terms of domain architecture, Ig-like C1-type spans 209 to 295 (PKTHMTHHPI…QHEGLPKPLT (87 aa)). Residues 299 to 308 (EPSSQPTIPI) form a connecting peptide region. Residues 309–332 (VGIIAGLVLLGAVITGAVVAAVMW) traverse the membrane as a helical segment. Topologically, residues 333-365 (RRKSSDRKGGSYTQAASSDSAQGSDVSLTACKV) are cytoplasmic. The tract at residues 339-360 (RKGGSYTQAASSDSAQGSDVSL) is disordered. A Phosphoserine modification is found at Ser-343. Tyr-344 carries the phosphotyrosine modification. Low complexity predominate over residues 346–359 (QAASSDSAQGSDVS). Residues Ser-349, Ser-350, Ser-352, Ser-356, and Ser-359 each carry the phosphoserine modification.

It belongs to the MHC class I family. Heterodimer of an alpha chain and a beta chain (beta-2-microglobulin).

Its subcellular location is the membrane. Its function is as follows. Involved in the presentation of foreign antigens to the immune system. The sequence is that of Patr class I histocompatibility antigen, A-108 alpha chain (Patr-A) from Pan troglodytes (Chimpanzee).